Reading from the N-terminus, the 244-residue chain is Adenosine 5'-phosphosulfate reductase (244 aa).

[4Fe-4S] cluster contacts are provided by cysteine 129, cysteine 130, cysteine 212, and cysteine 215. Cysteine 240 functions as the Nucleophile; cysteine thiosulfonate intermediate in the catalytic mechanism.

Belongs to the PAPS reductase family. CysH subfamily. [4Fe-4S] cluster serves as cofactor.

The protein resides in the cytoplasm. It catalyses the reaction [thioredoxin]-disulfide + sulfite + AMP + 2 H(+) = adenosine 5'-phosphosulfate + [thioredoxin]-dithiol. It participates in sulfur metabolism; hydrogen sulfide biosynthesis; sulfite from sulfate. Functionally, catalyzes the formation of sulfite from adenosine 5'-phosphosulfate (APS) using thioredoxin as an electron donor. This Neisseria meningitidis serogroup A / serotype 4A (strain DSM 15465 / Z2491) protein is Adenosine 5'-phosphosulfate reductase.